The chain runs to 249 residues: Pyridoxine 5'-phosphate synthase (249 aa).

Asn10 contributes to the 3-amino-2-oxopropyl phosphate binding site. 12-13 contributes to the 1-deoxy-D-xylulose 5-phosphate binding site; that stretch reads DH. 3-amino-2-oxopropyl phosphate is bound at residue Arg21. The active-site Proton acceptor is His46. 1-deoxy-D-xylulose 5-phosphate contacts are provided by Arg48 and His53. The Proton acceptor role is filled by Glu73. 1-deoxy-D-xylulose 5-phosphate is bound at residue Thr103. His194 acts as the Proton donor in catalysis. 3-amino-2-oxopropyl phosphate is bound by residues Gly195 and 216-217; that span reads GH.

Belongs to the PNP synthase family. As to quaternary structure, homooctamer; tetramer of dimers.

The protein localises to the cytoplasm. It carries out the reaction 3-amino-2-oxopropyl phosphate + 1-deoxy-D-xylulose 5-phosphate = pyridoxine 5'-phosphate + phosphate + 2 H2O + H(+). It functions in the pathway cofactor biosynthesis; pyridoxine 5'-phosphate biosynthesis; pyridoxine 5'-phosphate from D-erythrose 4-phosphate: step 5/5. Catalyzes the complicated ring closure reaction between the two acyclic compounds 1-deoxy-D-xylulose-5-phosphate (DXP) and 3-amino-2-oxopropyl phosphate (1-amino-acetone-3-phosphate or AAP) to form pyridoxine 5'-phosphate (PNP) and inorganic phosphate. This chain is Pyridoxine 5'-phosphate synthase, found in Rhodospirillum rubrum (strain ATCC 11170 / ATH 1.1.1 / DSM 467 / LMG 4362 / NCIMB 8255 / S1).